We begin with the raw amino-acid sequence, 96 residues long: uncharacterized protein (96 aa).

The next 3 helical transmembrane spans lie at 3–23 (KLTI…QLFA), 30–50 (TLGN…LASI), and 68–88 (IGLL…IIII).

It is found in the cell membrane. This is an uncharacterized protein from Bacillus subtilis (strain 168).